Consider the following 183-residue polypeptide: NADH-quinone oxidoreductase subunit I (183 aa).

4Fe-4S ferredoxin-type domains are found at residues 44–74 and 90–119; these read LNRW…VEAG and RVYQ…MTNE. The [4Fe-4S] cluster site is built by Cys54, Cys57, Cys60, Cys64, Cys99, Cys102, Cys105, and Cys109. A disordered region spans residues 143–183; it reads QGMEAPPHPMRLGETEKDYYRLGRDDNAAARADEQNSEAVQ. Positions 153–176 are enriched in basic and acidic residues; sequence RLGETEKDYYRLGRDDNAAARADE.

This sequence belongs to the complex I 23 kDa subunit family. As to quaternary structure, NDH-1 is composed of 14 different subunits. Subunits NuoA, H, J, K, L, M, N constitute the membrane sector of the complex. The cofactor is [4Fe-4S] cluster.

It localises to the cell membrane. The catalysed reaction is a quinone + NADH + 5 H(+)(in) = a quinol + NAD(+) + 4 H(+)(out). Its function is as follows. NDH-1 shuttles electrons from NADH, via FMN and iron-sulfur (Fe-S) centers, to quinones in the respiratory chain. The immediate electron acceptor for the enzyme in this species is believed to be ubiquinone. Couples the redox reaction to proton translocation (for every two electrons transferred, four hydrogen ions are translocated across the cytoplasmic membrane), and thus conserves the redox energy in a proton gradient. The polypeptide is NADH-quinone oxidoreductase subunit I (Thermobifida fusca (strain YX)).